The sequence spans 592 residues: Arginine--tRNA ligase (592 aa).

A 'HIGH' region motif is present at residues 134–144 (ANPTGPLHVGH).

It belongs to the class-I aminoacyl-tRNA synthetase family. In terms of assembly, monomer.

The protein localises to the cytoplasm. The catalysed reaction is tRNA(Arg) + L-arginine + ATP = L-arginyl-tRNA(Arg) + AMP + diphosphate. The sequence is that of Arginine--tRNA ligase from Coxiella burnetii (strain CbuK_Q154) (Coxiella burnetii (strain Q154)).